Reading from the N-terminus, the 294-residue chain is UPF0761 membrane protein YPTS_0028 (294 aa).

7 helical membrane-spanning segments follow: residues 44 to 64 (LLSL…FPMF), 67 to 87 (ISIK…GDII), 108 to 128 (GLIV…NIIW), 136 to 156 (LVFS…LVGA), 185 to 205 (VFPL…VPTV), 212 to 232 (ALIG…GFAM), and 246 to 266 (VLAV…IVLL).

This sequence belongs to the UPF0761 family.

The protein resides in the cell inner membrane. This is UPF0761 membrane protein YPTS_0028 from Yersinia pseudotuberculosis serotype IB (strain PB1/+).